The following is a 1058-amino-acid chain: Outer capsid protein VP4 (1058 aa).

This sequence belongs to the orthoreovirus lambda-2 protein family.

Its subcellular location is the virion. The catalysed reaction is a 5'-end diphospho-ribonucleoside in mRNA + GTP + H(+) = a 5'-end (5'-triphosphoguanosine)-ribonucleoside in mRNA + diphosphate. The enzyme catalyses a 5'-end (5'-triphosphoguanosine)-ribonucleoside in mRNA + S-adenosyl-L-methionine = a 5'-end (N(7)-methyl 5'-triphosphoguanosine)-ribonucleoside in mRNA + S-adenosyl-L-homocysteine. Functionally, outer capsid protein involved in mRNA capping. Catalyzes the last 3 enzymatic activities for formation of the 5' cap structure on the viral plus-strand transcripts, namely the RNA guanylyltransferase, RNA-7N- and RNA-2'O-methyltransferase activities. This is Outer capsid protein VP4 (S4) from Lymantria dispar cypovirus 1 (isolate Rao) (LdCPV-1).